Consider the following 364-residue polypeptide: MALALLEDWCRIMSVDEQKSLMVTGIPADFEEAEIQEVLQETLKSLGRYRLLGKIFRKQENANAVLLELLEDTDVSAIPSEVQGKGGVWKVIFKTPNQDTEFLERLNLFLEKEGQTVSGMFRALGQEGVSPATVPCISPELLAHLLGQAMAHAPQPLLPMRYRKLRVFSGSAVPAPEEESFEVWLEQATEIVKEWPVTEAEKKRWLAESLRGPALDLMHIVQADNPSISVEECLEAFKQVFGSLESRRTAQVRYLKTYQEEGEKVSAYVLRLETLLRRAVEKRAIPRRIADQVRLEQVMAGATLNQMLWCRLRELKDQGPPPSFLELMKVIREEEEEEASFENESIEEPEERDGYGRWNHEGDD.

A2 is modified (N-acetylalanine). The span at E335–E351 shows a compositional bias: acidic residues. Residues E335–D364 are disordered. Positions R352 to D364 are enriched in basic and acidic residues.

This sequence belongs to the PNMA family. Brain-specific. In some cancer patients, specifically expressed by testicular tumor cells.

It localises to the nucleus. It is found in the nucleolus. This is Paraneoplastic antigen Ma2 (PNMA2) from Homo sapiens (Human).